The sequence spans 106 residues: uncharacterized protein (106 aa).

Residues 78-98 (LAITGYVVSIPIVLPILIIFI) form a helical membrane-spanning segment.

The protein localises to the membrane. This is an uncharacterized protein from Haemophilus influenzae (strain ATCC 51907 / DSM 11121 / KW20 / Rd).